We begin with the raw amino-acid sequence, 417 residues long: RH-like protein (417 aa).

A run of 11 helical transmembrane segments spans residues 12 to 32 (CLPL…FFFT), 44 to 64 (LVAS…GLGF), 77 to 97 (VAFN…LDGF), 125 to 145 (ISMN…MELV), 172 to 192 (IHVF…KPLP), 203 to 223 (TSPS…WPTF), 238 to 258 (VFST…VSSL), 265 to 285 (INMT…GASC), 287 to 307 (VIHS…ISFG), 331 to 351 (TFGL…ALRV), and 358 to 378 (MIGF…AMSI).

Belongs to the ammonium transporter (TC 2.A.49) family. Rh subfamily.

The protein resides in the membrane. May be part of an oligomeric complex which is likely to have a transport or channel function in the erythrocyte membrane. This is RH-like protein from Macaca fascicularis (Crab-eating macaque).